Reading from the N-terminus, the 559-residue chain is Frizzled-1 (559 aa).

Residues 1 to 35 form the signal peptide; that stretch reads MKHSHLLQRCSAQLCTRGSSLILSLLLSVCLSVEG. At 36-239 the chain is on the extracellular side; that stretch reads QYNGEKGISI…FAPEELNFAR (204 aa). An FZ domain is found at 46–165; sequence PDHGYCQPIS…NGAGELCVGQ (120 aa). 5 disulfide bridges follow: Cys-51-Cys-112, Cys-59-Cys-105, Cys-96-Cys-133, Cys-122-Cys-162, and Cys-126-Cys-150. An N-linked (GlcNAc...) asparagine glycan is attached at Asn-65. Asn-166 carries an N-linked (GlcNAc...) asparagine glycan. Residues 240–260 form a helical membrane-spanning segment; the sequence is IWIGIWSVLCCASTLFTVLTY. At 261 to 273 the chain is on the cytoplasmic side; it reads LVDMKRFSYPERP. The helical transmembrane segment at 274–294 threads the bilayer; that stretch reads IIFLSGCYTMVAIAYIAGFLL. Over 295–321 the chain is Extracellular; that stretch reads EDKVVCNERFAEDGYKTVAQGTKKEGC. A helical membrane pass occupies residues 322–342; sequence TFLFMMLYFFSMASSIWWVIL. At 343–364 the chain is on the cytoplasmic side; sequence SLTWFLAAGMKWGHEAIEANSQ. A helical membrane pass occupies residues 365–385; it reads YFHLAAWAVPAIKTITILAVG. The Extracellular segment spans residues 386–408; the sequence is QVDGDTLSGVCFVGINNVDALRG. A helical transmembrane segment spans residues 409 to 429; it reads FVLAPLFVYLFIGTSFLLAGF. The Cytoplasmic segment spans residues 430 to 455; sequence VSLFRIRTIMKHDGTKTEKLEKLMVR. A helical membrane pass occupies residues 456 to 476; it reads IGIFSVLYTVPATIVIACYFY. At 477–513 the chain is on the extracellular side; the sequence is EQAFREQWEKSWISQSCKTYAIPCPSTGHPPMSPDFT. A helical membrane pass occupies residues 514 to 534; it reads VFMIKYLMTLIVGITSGFWIW. The Cytoplasmic segment spans residues 535–559; that stretch reads SGKTLNSWRKFYTRLTNSKQGETTV. Residues 537 to 542 carry the Lys-Thr-X-X-X-Trp motif, mediates interaction with the PDZ domain of Dvl family members motif; it reads KTLNSW. Positions 557-559 match the PDZ-binding motif; it reads TTV.

This sequence belongs to the G-protein coupled receptor Fz/Smo family. In terms of assembly, interacts with wnt8. In the embryo, expressed in the heart, pronephros and otic vesicles.

It localises to the cell membrane. Receptor for Wnt proteins. Functions in the canonical Wnt/beta-catenin signaling pathway. The canonical Wnt/beta-catenin signaling pathway leads to the activation of disheveled proteins, inhibition of GSK-3 kinase, nuclear accumulation of beta-catenin and activation of Wnt target genes. A second signaling pathway involving PKC and calcium fluxes has been seen for some family members, but it is not yet clear if it represents a distinct pathway or if it can be integrated in the canonical pathway, as PKC seems to be required for Wnt-mediated inactivation of GSK-3 kinase. Both pathways seem to involve interactions with G-proteins. May be involved in transduction and intercellular transmission of polarity information during tissue morphogenesis and/or in differentiated tissues. This is Frizzled-1 (fzd1) from Xenopus laevis (African clawed frog).